Reading from the N-terminus, the 353-residue chain is Protein MGF 360-13L (353 aa).

This sequence belongs to the asfivirus MGF 360 family.

Its function is as follows. Plays a role in virus cell tropism, and may be required for efficient virus replication in macrophages. In African swine fever virus (isolate Warthog/Namibia/Wart80/1980) (ASFV), this protein is Protein MGF 360-13L.